We begin with the raw amino-acid sequence, 355 residues long: Peptide chain release factor 1 (355 aa).

The residue at position 231 (Gln231) is an N5-methylglutamine. Over residues 280–291 (SERLAKESEARK) the composition is skewed to basic and acidic residues. The segment at 280-303 (SERLAKESEARKSQVGSGDRSERI) is disordered.

It belongs to the prokaryotic/mitochondrial release factor family. In terms of processing, methylated by PrmC. Methylation increases the termination efficiency of RF1.

It is found in the cytoplasm. In terms of biological role, peptide chain release factor 1 directs the termination of translation in response to the peptide chain termination codons UAG and UAA. This is Peptide chain release factor 1 from Campylobacter jejuni subsp. jejuni serotype O:6 (strain 81116 / NCTC 11828).